We begin with the raw amino-acid sequence, 196 residues long: CAG pathogenicity island protein 13 (196 aa).

In Helicobacter pylori (strain ATCC 700392 / 26695) (Campylobacter pylori), this protein is CAG pathogenicity island protein 13 (cagS).